The sequence spans 254 residues: Hydroxyacylglutathione hydrolase (254 aa).

Zn(2+)-binding residues include H54, H56, D58, H59, H111, D130, and H168.

This sequence belongs to the metallo-beta-lactamase superfamily. Glyoxalase II family. Monomer. Zn(2+) serves as cofactor.

The catalysed reaction is an S-(2-hydroxyacyl)glutathione + H2O = a 2-hydroxy carboxylate + glutathione + H(+). It participates in secondary metabolite metabolism; methylglyoxal degradation; (R)-lactate from methylglyoxal: step 2/2. In terms of biological role, thiolesterase that catalyzes the hydrolysis of S-D-lactoyl-glutathione to form glutathione and D-lactic acid. In Legionella pneumophila (strain Lens), this protein is Hydroxyacylglutathione hydrolase.